Here is a 352-residue protein sequence, read N- to C-terminus: C-C chemokine receptor type 5 (352 aa).

The Extracellular segment spans residues 1-30; that stretch reads MDYQVSSPTYDIDYDTSEPCQKINVKQIAA. Sulfotyrosine is present on tyrosine 3. 2 O-linked (GalNAc...) serine glycosylation sites follow: serine 6 and serine 7. Sulfotyrosine is present on residues tyrosine 10 and tyrosine 14. Cystine bridges form between cysteine 20–cysteine 269 and cysteine 101–cysteine 178. The chain crosses the membrane as a helical span at residues 31–58; sequence RLLPPLYSLVFIFGFVGNMLVILVLINC. Over 59–68 the chain is Cytoplasmic; sequence KRLKSMTDIY. The helical transmembrane segment at 69–89 threads the bilayer; the sequence is LLNLAISDLFFLLTVPFWAHY. Topologically, residues 90 to 102 are extracellular; that stretch reads AAAQWDFGNTMCQ. A helical membrane pass occupies residues 103–124; sequence LLTGLYFIGFFSGIFFIILLTI. Residues 125-141 are Cytoplasmic-facing; the sequence is DRYLAIVHAVFALKART. Residues 142-166 traverse the membrane as a helical segment; the sequence is VTFGVVTSVITWVVAVFASLPGIIF. Topologically, residues 167 to 198 are extracellular; sequence TRSQKEGLHYTCSSHFPYSQYQFWKNFQTLKI. Residues 199 to 218 traverse the membrane as a helical segment; it reads VILGLVLPLLVMVICYSGIL. Residues 219-235 lie on the Cytoplasmic side of the membrane; it reads KTLLRCRNEKKRHRAVR. A helical transmembrane segment spans residues 236–260; the sequence is LIFTIMIVYFLFWAPYNIVLLLNTF. The Extracellular segment spans residues 261-277; it reads QEFFGLNNCSSSNRLDQ. The helical transmembrane segment at 278–301 threads the bilayer; that stretch reads AMQVTETLGMTHCCINPIIYAFVG. Topologically, residues 302–352 are cytoplasmic; sequence EKFRNYLLVFFQKHIAKHFCKCCSIFQQEAPERASSVYTRSTGEQEISVGL. 3 S-palmitoyl cysteine lipidation sites follow: cysteine 321, cysteine 323, and cysteine 324. Residues serine 336, serine 337, serine 342, and serine 349 each carry the phosphoserine; by BARK1 modification.

This sequence belongs to the G-protein coupled receptor 1 family. Interacts with PRAF2. Efficient ligand binding to CCL3/MIP-1alpha and CCL4/MIP-1beta requires sulfation, O-glycosylation and sialic acid modifications. Glycosylation on Ser-6 is required for efficient binding of CCL4. Interacts with GRK2. Interacts with ARRB1 and ARRB2. Interacts with CNIH4. Interacts with S100A4; this interaction stimulates T-lymphocyte chemotaxis. Sulfated on at least 2 of the N-terminal tyrosines. Sulfation is required for efficient binding of the chemokines, CCL3 and CCL4. In terms of processing, palmitoylation in the C-terminal is important for cell surface expression. Post-translationally, phosphorylation on serine residues in the C-terminal is stimulated by binding CC chemokines especially by APO-RANTES. O-glycosylated, but not N-glycosylated. Ser-6 appears to be the major site even if Ser-7 may be also O-glycosylated. Also sialylated glycans present which contribute to chemokine binding. Thr-16 and Ser-17 may also be glycosylated and, if so, with small moieties such as a T-antigen.

The protein resides in the cell membrane. In terms of biological role, receptor for a number of inflammatory CC-chemokines including CCL3/MIP-1-alpha, CCL4/MIP-1-beta and RANTES and subsequently transduces a signal by increasing the intracellular calcium ion level. May play a role in the control of granulocytic lineage proliferation or differentiation. Participates in T-lymphocyte migration to the infection site by acting as a chemotactic receptor. The protein is C-C chemokine receptor type 5 (CCR5) of Nomascus leucogenys (Northern white-cheeked gibbon).